The chain runs to 356 residues: Alanine racemase, catabolic (356 aa).

Lys-35 (proton acceptor; specific for D-alanine) is an active-site residue. Lys-35 carries the post-translational modification N6-(pyridoxal phosphate)lysine. Substrate is bound at residue Arg-130. Residue Tyr-253 is the Proton acceptor; specific for L-alanine of the active site. Met-301 is a binding site for substrate.

The protein belongs to the alanine racemase family. Requires pyridoxal 5'-phosphate as cofactor.

The catalysed reaction is L-alanine = D-alanine. Functionally, isomerizes L-alanine to D-alanine which is then oxidized to pyruvate by DadA. This chain is Alanine racemase, catabolic (dadB), found in Klebsiella aerogenes (Enterobacter aerogenes).